The chain runs to 583 residues: Leucine-rich repeat-containing protein 47 (583 aa).

Alanine 2 carries the N-acetylalanine modification. 7 LRR repeats span residues 76-95 (QLHS…SPEL), 100-121 (ALRV…QGLG), 130-152 (QLQS…ARCA), 154-175 (RLQS…LFRP), 180-202 (LLSE…AHLA), 203-225 (SLKT…ADCP), and 226-246 (KLKE…EKMV). A disordered region spans residues 260-300 (VGGRGGGKGKGRAEGSEKEESRRKRRERKQRREGGDGEEQD). The segment covering 270 to 281 (GRAEGSEKEESR) has biased composition (basic and acidic residues). Phosphoserine is present on residues serine 315 and serine 431. Positions 402–437 (LGRKEAKAKELVRQLQLEAEEQRKQKKRQSVSGLHR) form a coiled coil. A Phosphotyrosine modification is found at tyrosine 509. Residues 513 to 544 (NKEEGSLSDTEADAVSGQLPDPTTNPSAGKDG) form a disordered region. Phosphoserine is present on residues serine 518 and serine 520.

The sequence is that of Leucine-rich repeat-containing protein 47 (LRRC47) from Homo sapiens (Human).